Reading from the N-terminus, the 515-residue chain is Cytochrome P450 monooxygenase mfmA (515 aa).

The chain crosses the membrane as a helical span at residues 3-23 (KISIIPIVGVALSLAIILQLG). Cys-453 serves as a coordination point for heme.

The protein belongs to the cytochrome P450 family. Heme serves as cofactor.

The protein resides in the membrane. It functions in the pathway secondary metabolite biosynthesis; terpenoid biosynthesis. Cytochrome P450 monooxygenase; part of the gene cluster that mediates the biosynthesis of the phthalide-terpenoid hybrid 11'-O-desmethylfendlerol. Within the pathway, mfma and mfmC act together to convert 3,5-dimethylorsellinic acid (DMOA) into the phthalide 5,7-dihydroxy-4-(hydroxymethyl)-6-methylphthalide. MfmA performs especially an hydroxylation at C-9. The biosynthesis of 11'-O-desmethylfendlerol begins with the NR-PKS mfmB that forms 3,5-dimethylorsellinic acid (DMOA), which is then transformed into the phthalide 5,7-dihydroxy-4-(hydroxymethyl)-6-methylphthalide by the cytochrome P450 monooxygenase mfmA and the hydrolase mfmC. Subsequently, the methyltransferase mfmE catalyzes 7-O-methylation to yield 5-hydroxy-4-(hydroxymethyl)-7-methoxy-6-methylphthalide, which undergoes C-3 hydroxylation by the cytochrome P450 monooxygenase mfmF. The resultant cyclopolic acid (2,5-dihydroxy-4-(hydroxymethyl)-7-methoxy-6-methylphthalide) is then farnesylated by the DMATS-type prenyltransferase mfmD to afford 5-O-farnesylcyclopolic acid. Finally, the Pyr4-family terpene cyclase mfmH cyclizes the farnesyl moiety of 5-O-farnesylcyclopolic acid into a drimane-like structure, thus completing the biosynthesis of 11'-O-desmethylfendlerol. This chain is Cytochrome P450 monooxygenase mfmA, found in Annulohypoxylon moriforme (Filamentous fungus).